A 599-amino-acid polypeptide reads, in one-letter code: Elongation factor 4 (599 aa).

The 183-residue stretch at 4 to 186 (KYIRNFSIIA…AIVEKVPPPK (183 aa)) folds into the tr-type G domain. Residues 16-21 (DHGKST) and 133-136 (NKID) contribute to the GTP site.

This sequence belongs to the TRAFAC class translation factor GTPase superfamily. Classic translation factor GTPase family. LepA subfamily.

Its subcellular location is the cell inner membrane. The enzyme catalyses GTP + H2O = GDP + phosphate + H(+). In terms of biological role, required for accurate and efficient protein synthesis under certain stress conditions. May act as a fidelity factor of the translation reaction, by catalyzing a one-codon backward translocation of tRNAs on improperly translocated ribosomes. Back-translocation proceeds from a post-translocation (POST) complex to a pre-translocation (PRE) complex, thus giving elongation factor G a second chance to translocate the tRNAs correctly. Binds to ribosomes in a GTP-dependent manner. The sequence is that of Elongation factor 4 from Bdellovibrio bacteriovorus (strain ATCC 15356 / DSM 50701 / NCIMB 9529 / HD100).